A 94-amino-acid chain; its full sequence is Co-chaperonin GroES (94 aa).

The protein belongs to the GroES chaperonin family. Heptamer of 7 subunits arranged in a ring. Interacts with the chaperonin GroEL.

The protein resides in the cytoplasm. Functionally, together with the chaperonin GroEL, plays an essential role in assisting protein folding. The GroEL-GroES system forms a nano-cage that allows encapsulation of the non-native substrate proteins and provides a physical environment optimized to promote and accelerate protein folding. GroES binds to the apical surface of the GroEL ring, thereby capping the opening of the GroEL channel. The chain is Co-chaperonin GroES from Bacillus cereus (strain ZK / E33L).